Here is an 893-residue protein sequence, read N- to C-terminus: Eukaryotic translation initiation factor 3 subunit A (893 aa).

One can recognise a PCI domain in the interval 319–502; sequence LQRMAAHVLL…NSIFFGTDLT (184 aa). Coiled-coil stretches lie at residues 576–707 and 784–881; these read QKII…RAKR and EIAL…REVA. 2 disordered regions span residues 592–634 and 837–893; these read AREL…EIQA and AEAR…RRRQ. A compositionally biased stretch (basic and acidic residues) spans 837–881; the sequence is AEARRLEREAEDEKRRQQYEKQRAKEEEAERKIQEDRDRLAREVA.

The protein belongs to the eIF-3 subunit A family. In terms of assembly, component of the eukaryotic translation initiation factor 3 (eIF-3) complex. The eIF-3 complex interacts with pix.

The protein localises to the cytoplasm. RNA-binding component of the eukaryotic translation initiation factor 3 (eIF-3) complex, which is involved in protein synthesis of a specialized repertoire of mRNAs and, together with other initiation factors, stimulates binding of mRNA and methionyl-tRNAi to the 40S ribosome. The eIF-3 complex specifically targets and initiates translation of a subset of mRNAs involved in cell proliferation. This chain is Eukaryotic translation initiation factor 3 subunit A, found in Drosophila grimshawi (Hawaiian fruit fly).